Consider the following 605-residue polypeptide: Elongation factor 4 (605 aa).

In terms of domain architecture, tr-type G spans 9-192 (SRIRNFCIIA…AIIARVPSPA (184 aa)). GTP is bound by residues 21–26 (DHGKST) and 139–142 (NKID).

It belongs to the TRAFAC class translation factor GTPase superfamily. Classic translation factor GTPase family. LepA subfamily.

The protein localises to the cell inner membrane. The catalysed reaction is GTP + H2O = GDP + phosphate + H(+). Required for accurate and efficient protein synthesis under certain stress conditions. May act as a fidelity factor of the translation reaction, by catalyzing a one-codon backward translocation of tRNAs on improperly translocated ribosomes. Back-translocation proceeds from a post-translocation (POST) complex to a pre-translocation (PRE) complex, thus giving elongation factor G a second chance to translocate the tRNAs correctly. Binds to ribosomes in a GTP-dependent manner. This Chlorobium phaeovibrioides (strain DSM 265 / 1930) (Prosthecochloris vibrioformis (strain DSM 265)) protein is Elongation factor 4.